The primary structure comprises 104 residues: UPF0145 protein HCH_01985 (104 aa).

It belongs to the UPF0145 family.

In Hahella chejuensis (strain KCTC 2396), this protein is UPF0145 protein HCH_01985.